We begin with the raw amino-acid sequence, 99 residues long: Translation initiation factor 1A (99 aa).

The S1-like domain occupies 11 to 84; the sequence is RRVRTPRRGE…EKADIVWRYT (74 aa).

The protein belongs to the eIF-1A family.

Seems to be required for maximal rate of protein biosynthesis. Enhances ribosome dissociation into subunits and stabilizes the binding of the initiator Met-tRNA(I) to 40 S ribosomal subunits. The protein is Translation initiation factor 1A (eIF1A) of Methanothermobacter thermautotrophicus (strain ATCC 29096 / DSM 1053 / JCM 10044 / NBRC 100330 / Delta H) (Methanobacterium thermoautotrophicum).